A 252-amino-acid chain; its full sequence is Secreted LysM effector LysM1 (252 aa).

The 45-residue stretch at 20–64 (FAIPGDPGDTCDTLSDRWGITIDIFKSLNPGVNCPNLVANMEYCV) folds into the LysM 1 domain. The segment at 71–98 (DTPSTTTTAKPTMTPTSTPTKTTTTSTA) is disordered. Low complexity predominate over residues 72–98 (TPSTTTTAKPTMTPTSTPTKTTTTSTA). LysM domains are found at residues 126 to 172 (KFHL…YVCV) and 204 to 250 (KFHL…YVCI).

The protein belongs to the secreted LysM effector family.

The protein resides in the secreted. The protein localises to the cell wall. In terms of biological role, secreted effector that binds two substrates, chitin and N-linked oligosaccharides associated with human skin glycoproteins. Could provide the pathogen with three important functions including shielding host cell wall chitin from the human immune system, shielding the pathogen's glycoproteins from host degradation and immune surveillance, and helping facilitate pathogen adhesion to human skin. This Trichophyton rubrum (strain ATCC MYA-4607 / CBS 118892) (Athlete's foot fungus) protein is Secreted LysM effector LysM1.